The following is a 157-amino-acid chain: 6,7-dimethyl-8-ribityllumazine synthase (157 aa).

5-amino-6-(D-ribitylamino)uracil is bound by residues Phe25, 59–61 (AME), and 83–85 (AII). Residue 88 to 89 (ST) coordinates (2S)-2-hydroxy-3-oxobutyl phosphate. His91 (proton donor) is an active-site residue. Phe116 lines the 5-amino-6-(D-ribitylamino)uracil pocket. A (2S)-2-hydroxy-3-oxobutyl phosphate-binding site is contributed by Arg130.

Belongs to the DMRL synthase family.

It carries out the reaction (2S)-2-hydroxy-3-oxobutyl phosphate + 5-amino-6-(D-ribitylamino)uracil = 6,7-dimethyl-8-(1-D-ribityl)lumazine + phosphate + 2 H2O + H(+). It participates in cofactor biosynthesis; riboflavin biosynthesis; riboflavin from 2-hydroxy-3-oxobutyl phosphate and 5-amino-6-(D-ribitylamino)uracil: step 1/2. Functionally, catalyzes the formation of 6,7-dimethyl-8-ribityllumazine by condensation of 5-amino-6-(D-ribitylamino)uracil with 3,4-dihydroxy-2-butanone 4-phosphate. This is the penultimate step in the biosynthesis of riboflavin. In Lawsonia intracellularis (strain PHE/MN1-00), this protein is 6,7-dimethyl-8-ribityllumazine synthase.